Reading from the N-terminus, the 280-residue chain is Ribose-phosphate pyrophosphokinase (280 aa).

Residues 32-34 (DGE) and 89-90 (RQ) each bind ATP. 2 residues coordinate Mg(2+): His-122 and Asp-160. Lys-183 is a catalytic residue. D-ribose 5-phosphate is bound by residues Arg-185, Asp-209, and 213–217 (STGGT).

It belongs to the ribose-phosphate pyrophosphokinase family. Class III (archaeal) subfamily. Mg(2+) serves as cofactor.

It localises to the cytoplasm. It carries out the reaction D-ribose 5-phosphate + ATP = 5-phospho-alpha-D-ribose 1-diphosphate + AMP + H(+). The protein operates within metabolic intermediate biosynthesis; 5-phospho-alpha-D-ribose 1-diphosphate biosynthesis; 5-phospho-alpha-D-ribose 1-diphosphate from D-ribose 5-phosphate (route I): step 1/1. Activated by Co(2+) and Ni(2+) ions, however Mg(2+) ion shows almost no significant effect on the activity. Equally inhibited by ADP, CTP and GTP, while dTTP and UTP are less inhibitory. Involved in the biosynthesis of the central metabolite phospho-alpha-D-ribosyl-1-pyrophosphate (PRPP) via the transfer of pyrophosphoryl group from ATP to 1-hydroxyl of ribose-5-phosphate (Rib-5-P). It can also use CTP and GTP as substrates in addition to ATP. This chain is Ribose-phosphate pyrophosphokinase, found in Thermococcus kodakarensis (strain ATCC BAA-918 / JCM 12380 / KOD1) (Pyrococcus kodakaraensis (strain KOD1)).